A 162-amino-acid chain; its full sequence is Serine-protein kinase RsbW (162 aa).

This sequence belongs to the anti-sigma-factor family.

The enzyme catalyses L-seryl-[protein] + ATP = O-phospho-L-seryl-[protein] + ADP + H(+). It catalyses the reaction L-threonyl-[protein] + ATP = O-phospho-L-threonyl-[protein] + ADP + H(+). Functionally, negative regulator of sigma-B activity. Phosphorylates and inactivates its specific antagonist protein, RsbV. Upon phosphorylation of RsbV, RsbW is released and binds to sigma-B, thereby blocking its ability to form an RNA polymerase holoenzyme (E-sigma-B). This chain is Serine-protein kinase RsbW, found in Bacillus pumilus (strain SAFR-032).